We begin with the raw amino-acid sequence, 356 residues long: Peritrophin-44 (356 aa).

A signal peptide spans 1 to 23 (MKELQITTGCLLLMVAAIGKTSA). Chitin-binding type-2 domains are found at residues 28–85 (SETC…KCIS), 88–146 (KNAC…ECTA), 147–201 (DSIC…PCLA), 220–283 (NFVC…PCTF), and 286–355 (CGNL…YKLC). Cysteines 62 and 75 form a disulfide. N-linked (GlcNAc...) asparagine glycosylation is present at Asn-114. Intrachain disulfides connect Cys-122/Cys-135, Cys-181/Cys-193, and Cys-262/Cys-273. Residue Asn-309 is glycosylated (N-linked (GlcNAc...) asparagine).

Glycosylated. In terms of tissue distribution, larval peritrophic membrane.

Functionally, may have roles in the maintenance of peritrophic membrane structure and in the determination of the porosity of the peritrophic membrane. May bind chitin or related oligosaccharide structures. In Lucilia cuprina (Green bottle fly), this protein is Peritrophin-44.